Here is a 209-residue protein sequence, read N- to C-terminus: Imidazole glycerol phosphate synthase subunit HisH (209 aa).

The Glutamine amidotransferase type-1 domain maps to 1–205; sequence MIAIIDYGMG…KGVVETWKSS (205 aa). Catalysis depends on Cys-79, which acts as the Nucleophile. Catalysis depends on residues His-180 and Glu-182.

Heterodimer of HisH and HisF.

The protein resides in the cytoplasm. The catalysed reaction is 5-[(5-phospho-1-deoxy-D-ribulos-1-ylimino)methylamino]-1-(5-phospho-beta-D-ribosyl)imidazole-4-carboxamide + L-glutamine = D-erythro-1-(imidazol-4-yl)glycerol 3-phosphate + 5-amino-1-(5-phospho-beta-D-ribosyl)imidazole-4-carboxamide + L-glutamate + H(+). It carries out the reaction L-glutamine + H2O = L-glutamate + NH4(+). It participates in amino-acid biosynthesis; L-histidine biosynthesis; L-histidine from 5-phospho-alpha-D-ribose 1-diphosphate: step 5/9. Its function is as follows. IGPS catalyzes the conversion of PRFAR and glutamine to IGP, AICAR and glutamate. The HisH subunit catalyzes the hydrolysis of glutamine to glutamate and ammonia as part of the synthesis of IGP and AICAR. The resulting ammonia molecule is channeled to the active site of HisF. The polypeptide is Imidazole glycerol phosphate synthase subunit HisH (Bacillus thuringiensis subsp. konkukian (strain 97-27)).